We begin with the raw amino-acid sequence, 176 residues long: PPE family protein PPE57 (176 aa).

The protein belongs to the mycobacterial PPE family. In terms of assembly, interacts with human TLR2.

It localises to the secreted. The protein localises to the cell wall. The protein resides in the cell surface. Its function is as follows. Plays a key role in regulating innate and adaptive immune responses through human Toll-like receptor 2 (TLR2). Interacts with TLR2, leading to the subsequent activation of the mitogen-activated protein kinase (MAPK) and nuclear factor kappa B (NF-kappa-B) signaling pathways. Induces macrophage activation by augmenting the expression of several cell surface molecules (CD40, CD80, CD86 and MHC class II) and pro-inflammatory cytokines (TNF-alpha, IL-6 and IL-12p40) within macrophages. Also participates in adaptive immunity by directing Th1-polarised immune responses. Stimulates specific humoral and cellular immune responses in tuberculosis (TB) patients. Induces a strong IgG(1) antibody response and an increased Th1/Th2 type immune response in mice. This is PPE family protein PPE57 from Mycobacterium tuberculosis (strain ATCC 25618 / H37Rv).